A 73-amino-acid chain; its full sequence is Translation initiation factor IF-1 (73 aa).

An S1-like domain is found at 1–72; that stretch reads MAKQDVIEME…TKGRITYRLR (72 aa).

This sequence belongs to the IF-1 family. Component of the 30S ribosomal translation pre-initiation complex which assembles on the 30S ribosome in the order IF-2 and IF-3, IF-1 and N-formylmethionyl-tRNA(fMet); mRNA recruitment can occur at any time during PIC assembly.

The protein localises to the cytoplasm. Its function is as follows. One of the essential components for the initiation of protein synthesis. Stabilizes the binding of IF-2 and IF-3 on the 30S subunit to which N-formylmethionyl-tRNA(fMet) subsequently binds. Helps modulate mRNA selection, yielding the 30S pre-initiation complex (PIC). Upon addition of the 50S ribosomal subunit IF-1, IF-2 and IF-3 are released leaving the mature 70S translation initiation complex. In Gloeobacter violaceus (strain ATCC 29082 / PCC 7421), this protein is Translation initiation factor IF-1.